Here is a 794-residue protein sequence, read N- to C-terminus: MHLEAARVIFFLWIFLQVQGIKDLSIKIYGSEIKDIDNAPRTEATKNTAKTYKVSTMRRIFDLAKHRTKRSAFFPTGVKVCPQESMEQILASLQAYYRLRVCQEAVWEAYRIFLDRLPEPGEYQDWVSVCQQETFCLFDIGKNFSNSQEHLDLLQQRMKQRNFLERKDEVVTKETLGELGQTPGLQQTLPVSHPGPCLSLPMTTAQRNPQLHPSRTPRVPTRERKIEFTDAAEDALEQKVELSISLANQKFKSELDNSQSPYYLEVAAKSQLQMQKIFKKLPGFKEIHVSGFRPKKERDGTSSTEMQLTAIFKKGKAEAKSPASDPLSLDSNKIESEGDPRGTTEEEKQRELYPTASELRKLISRALEEDQSLDVGTIQFTDEIVGSLPSLDPDTQLVLPTLLTDITKDATLSPELPLGQPRLETVDRAGHSPPGASPTDGWSPPAMTSTSLSETLPFFTASSVFPQTDQSATDIMSIDQTVLIPRLTVPTDDYSAISPLVPEISHLPTSSEDWLSTSSQDTMEYLDGVDLTKTPTSSEGPRNSVGMFPAWIIFLENITPDPGLRYITTSAMTVAARGRELVVFFSLRVANVPFSTDLFNKSSLEYQALEQRFTQLLVPNLRSNLTGFKQLEILNFRNGSVIVNSKVRFAKSVPYNLTKAVRGVLEDFRSTAAQQLDLEIDSYSLDVEPADQADPCKFLACGEFAQCVRNEWTEEAECRCRSGTQALVLPIEDCEDIPGKGTPCRSLDQSKNQVYEPGVKKFQRQQDNKVTMKRKFELLTIGYEEFNYQDWEGN.

Positions 1 to 20 (MHLEAARVIFFLWIFLQVQG) are cleaved as a signal peptide. Residues 202–213 (MTTAQRNPQLHP) are compositionally biased toward polar residues. 3 disordered regions span residues 202–221 (MTTAQRNPQLHPSRTPRVPT), 314–355 (KGKA…LYPT), and 413–449 (SPELPLGQPRLETVDRAGHSPPGASPTDGWSPPAMTS). The SEA 1 domain occupies 236–357 (LEQKVELSIS…KQRELYPTAS (122 aa)). The span at 332 to 351 (NKIESEGDPRGTTEEEKQRE) shows a compositional bias: basic and acidic residues. Residues threonine 425 and threonine 439 are each glycosylated (O-linked (GalNAc...) threonine). A glycan (O-linked (GalNAc...) serine) is linked at serine 443. Threonine 448 and threonine 450 each carry an O-linked (GalNAc...) threonine glycan. The SEA 2 domain occupies 579 to 692 (RELVVFFSLR…YSLDVEPADQ (114 aa)). N-linked (GlcNAc...) asparagine glycosylation is present at asparagine 624. The short motif at 629–637 (KQLEILNFR) is the Heparin- and hyaluronan-binding element. Asparagine 656 is a glycosylation site (N-linked (GlcNAc...) asparagine).

In terms of processing, highly glycosylated (N- and O-linked carbohydrates and sialic acid).

Its subcellular location is the cell projection. The protein localises to the cilium. The protein resides in the photoreceptor outer segment. It localises to the secreted. It is found in the extracellular space. Its subcellular location is the extracellular matrix. The protein localises to the interphotoreceptor matrix. The protein resides in the photoreceptor inner segment. In terms of biological role, chondroitin sulfate-, heparin- and hyaluronan-binding protein. May serve to form a basic macromolecular scaffold comprising the insoluble interphotoreceptor matrix. The sequence is that of Interphotoreceptor matrix proteoglycan 1 (IMPG1) from Bos taurus (Bovine).